Reading from the N-terminus, the 87-residue chain is Cell division topological specificity factor (87 aa).

This sequence belongs to the MinE family.

Its function is as follows. Prevents the cell division inhibition by proteins MinC and MinD at internal division sites while permitting inhibition at polar sites. This ensures cell division at the proper site by restricting the formation of a division septum at the midpoint of the long axis of the cell. This chain is Cell division topological specificity factor, found in Vibrio parahaemolyticus serotype O3:K6 (strain RIMD 2210633).